The primary structure comprises 147 residues: 3-dehydroquinate dehydratase (147 aa).

Tyr-23 acts as the Proton acceptor in catalysis. Asn-74, His-80, and Asp-87 together coordinate substrate. His-100 acts as the Proton donor in catalysis. Substrate-binding positions include 101–102 (IS) and Arg-111.

Belongs to the type-II 3-dehydroquinase family. As to quaternary structure, homododecamer.

It catalyses the reaction 3-dehydroquinate = 3-dehydroshikimate + H2O. Its pathway is metabolic intermediate biosynthesis; chorismate biosynthesis; chorismate from D-erythrose 4-phosphate and phosphoenolpyruvate: step 3/7. Functionally, catalyzes a trans-dehydration via an enolate intermediate. This is 3-dehydroquinate dehydratase from Prochlorococcus marinus (strain MIT 9301).